The chain runs to 643 residues: Phosphomethylpyrimidine synthase (643 aa).

Substrate-binding positions include Asn248, Met277, Tyr306, His342, 362-364 (SRG), 403-406 (DGLR), and Glu442. Zn(2+) is bound at residue His446. Residue Tyr469 participates in substrate binding. Residue His510 coordinates Zn(2+). The [4Fe-4S] cluster site is built by Cys590, Cys593, and Cys598.

The protein belongs to the ThiC family. In terms of assembly, homodimer. The cofactor is [4Fe-4S] cluster.

It carries out the reaction 5-amino-1-(5-phospho-beta-D-ribosyl)imidazole + S-adenosyl-L-methionine = 4-amino-2-methyl-5-(phosphooxymethyl)pyrimidine + CO + 5'-deoxyadenosine + formate + L-methionine + 3 H(+). The protein operates within cofactor biosynthesis; thiamine diphosphate biosynthesis. In terms of biological role, catalyzes the synthesis of the hydroxymethylpyrimidine phosphate (HMP-P) moiety of thiamine from aminoimidazole ribotide (AIR) in a radical S-adenosyl-L-methionine (SAM)-dependent reaction. In Burkholderia pseudomallei (strain 1106a), this protein is Phosphomethylpyrimidine synthase.